Reading from the N-terminus, the 263-residue chain is Glutamate 5-kinase (263 aa).

K14 contacts ATP. Residues S52, D137, and N149 each contribute to the substrate site. Residues 169–170 (SD) and 211–217 (TGGIVTK) contribute to the ATP site.

The protein belongs to the glutamate 5-kinase family. Homotetramer; oligomerization is not affected by L-proline feedback inhibition. Mg(2+) is required as a cofactor.

The catalysed reaction is L-glutamate + ATP = L-glutamyl 5-phosphate + ADP. It participates in amino-acid biosynthesis; L-proline biosynthesis; L-glutamate 5-semialdehyde from L-glutamate: step 1/2. With respect to regulation, inhibited by L-proline as part of a negative feedback loop. Also inhibited by L-proline analogs 3,4-dehydro-L-proline, L-azetidine-2-carboxylic acid and L-4-thiazolidine carboxylic acid. Functionally, catalyzes the transfer of a phosphate group to glutamate to form L-glutamate 5-phosphate. May be important for growth and survival. This Leishmania donovani protein is Glutamate 5-kinase.